The following is a 531-amino-acid chain: Peptide chain release factor 3 (531 aa).

The region spanning 10 to 278 (RRRRTFAIIS…SLIDWAPAPK (269 aa)) is the tr-type G domain. Residues 19-26 (SHPDAGKT), 87-91 (DTPGH), and 141-144 (NKYD) each bind GTP.

The protein belongs to the TRAFAC class translation factor GTPase superfamily. Classic translation factor GTPase family. PrfC subfamily.

It is found in the cytoplasm. Its function is as follows. Increases the formation of ribosomal termination complexes and stimulates activities of RF-1 and RF-2. It binds guanine nucleotides and has strong preference for UGA stop codons. It may interact directly with the ribosome. The stimulation of RF-1 and RF-2 is significantly reduced by GTP and GDP, but not by GMP. The protein is Peptide chain release factor 3 of Neisseria meningitidis serogroup C / serotype 2a (strain ATCC 700532 / DSM 15464 / FAM18).